A 388-amino-acid polypeptide reads, in one-letter code: Succinate--CoA ligase [ADP-forming] subunit beta (388 aa).

Residues 9-244 (KSLFAEYGLP…PSQDDAREAH (236 aa)) enclose the ATP-grasp domain. Residues K46, 53-55 (GRG), E99, T102, and E107 each bind ATP. Positions 199 and 213 each coordinate Mg(2+). Residues N264 and 321–323 (GIV) each bind substrate.

It belongs to the succinate/malate CoA ligase beta subunit family. As to quaternary structure, heterotetramer of two alpha and two beta subunits. Requires Mg(2+) as cofactor.

It catalyses the reaction succinate + ATP + CoA = succinyl-CoA + ADP + phosphate. The enzyme catalyses GTP + succinate + CoA = succinyl-CoA + GDP + phosphate. It functions in the pathway carbohydrate metabolism; tricarboxylic acid cycle; succinate from succinyl-CoA (ligase route): step 1/1. Its function is as follows. Succinyl-CoA synthetase functions in the citric acid cycle (TCA), coupling the hydrolysis of succinyl-CoA to the synthesis of either ATP or GTP and thus represents the only step of substrate-level phosphorylation in the TCA. The beta subunit provides nucleotide specificity of the enzyme and binds the substrate succinate, while the binding sites for coenzyme A and phosphate are found in the alpha subunit. The protein is Succinate--CoA ligase [ADP-forming] subunit beta of Shewanella woodyi (strain ATCC 51908 / MS32).